A 280-amino-acid chain; its full sequence is Probable cell division protein WhiA (280 aa).

Positions 246–279 (SLEQIAQFFERKYKVQITRSGIQHLNAKLKKLNQ) form a DNA-binding region, H-T-H motif.

Belongs to the WhiA family.

In terms of biological role, involved in cell division and chromosome segregation. This is Probable cell division protein WhiA from Mycoplasma pneumoniae (strain ATCC 29342 / M129 / Subtype 1) (Mycoplasmoides pneumoniae).